A 358-amino-acid chain; its full sequence is 3-isopropylmalate dehydrogenase (358 aa).

76-89 (GPRWDNLTGAERPE) serves as a coordination point for NAD(+). Substrate is bound by residues R96, R106, R135, and D225. Mg(2+) is bound by residues D225, D249, and D253. Position 283–295 (283–295 (GSAPDIAGQNKAN)) interacts with NAD(+).

Belongs to the isocitrate and isopropylmalate dehydrogenases family. LeuB type 1 subfamily. As to quaternary structure, homodimer. Mg(2+) is required as a cofactor. The cofactor is Mn(2+).

It localises to the cytoplasm. The catalysed reaction is (2R,3S)-3-isopropylmalate + NAD(+) = 4-methyl-2-oxopentanoate + CO2 + NADH. The protein operates within amino-acid biosynthesis; L-leucine biosynthesis; L-leucine from 3-methyl-2-oxobutanoate: step 3/4. Functionally, catalyzes the oxidation of 3-carboxy-2-hydroxy-4-methylpentanoate (3-isopropylmalate) to 3-carboxy-4-methyl-2-oxopentanoate. The product decarboxylates to 4-methyl-2 oxopentanoate. This chain is 3-isopropylmalate dehydrogenase, found in Oleidesulfovibrio alaskensis (strain ATCC BAA-1058 / DSM 17464 / G20) (Desulfovibrio alaskensis).